The chain runs to 643 residues: Phosphomethylpyrimidine synthase (643 aa).

Substrate is bound by residues asparagine 248, methionine 277, tyrosine 306, histidine 342, 362-364, 403-406, and glutamate 442; these read SRG and DGLR. Histidine 446 provides a ligand contact to Zn(2+). A substrate-binding site is contributed by tyrosine 469. Histidine 510 serves as a coordination point for Zn(2+). Residues cysteine 590, cysteine 593, and cysteine 598 each coordinate [4Fe-4S] cluster.

The protein belongs to the ThiC family. In terms of assembly, homodimer. Requires [4Fe-4S] cluster as cofactor.

It carries out the reaction 5-amino-1-(5-phospho-beta-D-ribosyl)imidazole + S-adenosyl-L-methionine = 4-amino-2-methyl-5-(phosphooxymethyl)pyrimidine + CO + 5'-deoxyadenosine + formate + L-methionine + 3 H(+). Its pathway is cofactor biosynthesis; thiamine diphosphate biosynthesis. Catalyzes the synthesis of the hydroxymethylpyrimidine phosphate (HMP-P) moiety of thiamine from aminoimidazole ribotide (AIR) in a radical S-adenosyl-L-methionine (SAM)-dependent reaction. The protein is Phosphomethylpyrimidine synthase of Burkholderia ambifaria (strain MC40-6).